The sequence spans 138 residues: Ribosome-binding factor A (138 aa).

Residues 119 to 138 (DMDEKKNSDEKRDSDEKLED) are disordered.

This sequence belongs to the RbfA family. In terms of assembly, monomer. Binds 30S ribosomal subunits, but not 50S ribosomal subunits or 70S ribosomes.

It is found in the cytoplasm. Functionally, one of several proteins that assist in the late maturation steps of the functional core of the 30S ribosomal subunit. Associates with free 30S ribosomal subunits (but not with 30S subunits that are part of 70S ribosomes or polysomes). Required for efficient processing of 16S rRNA. May interact with the 5'-terminal helix region of 16S rRNA. This is Ribosome-binding factor A from Alkaliphilus metalliredigens (strain QYMF).